A 389-amino-acid chain; its full sequence is Ecto-ADP-ribosyltransferase 3 (389 aa).

Residues 1–26 form the signal peptide; it reads MKTGHFEIVTMLLATMILVDIFQVKA. A disulfide bridge links cysteine 43 with cysteine 256. In terms of domain architecture, TR mART core spans 64–251; the sequence is QQLDTVWENA…LILQSINKTC (188 aa). Tyrosine 101 and arginine 163 together coordinate NAD(+). Residue asparagine 248 is glycosylated (N-linked (GlcNAc...) asparagine). Repeat copies occupy residues 283 to 292, 293 to 302, and 303 to 312. The 3 X 10 AA tandem repeats of [GS]-E-K-N-[QW]-K-L-E-D-H stretch occupies residues 283–312; sequence GEKNQKLEDHSEKNWKLEDHGEKNQKLEDH. The tract at residues 325–362 is disordered; it reads MKIPEPFPLPEDKSQGNINNPTPGPVPVPGPKSHPSAS. The O-linked (GalNAc...) threonine glycan is linked to threonine 346. Over residues 346–356 the composition is skewed to pro residues; it reads TPGPVPVPGPK. Residue serine 362 is the site of GPI-anchor amidated serine attachment. A propeptide spans 363–389 (removed in mature form); sequence SGKLLLPQFGMVIILISVSAINLFVAL.

It belongs to the Arg-specific ADP-ribosyltransferase family. Post-translationally, O-glycosylated with core 1 or possibly core 8 glycans. Testis specific.

It is found in the cell membrane. The enzyme catalyses L-arginyl-[protein] + NAD(+) = N(omega)-(ADP-D-ribosyl)-L-arginyl-[protein] + nicotinamide + H(+). The sequence is that of Ecto-ADP-ribosyltransferase 3 (ART3) from Homo sapiens (Human).